The sequence spans 1095 residues: Collagen, type I, alpha 1a (1095 aa).

Residues 1-21 (SPAMPVPGPMGPMGPRGPPGS) show a composition bias toward pro residues. The tract at residues 1–1011 (SPAMPVPGPM…QPQEKAPDPY (1011 aa)) is disordered. Residues 22–49 (PGASGPQGFTGPPGEPGEAGSAGAMGPR) show a composition bias toward low complexity. A compositionally biased stretch (basic and acidic residues) spans 58–72 (NGEDGESGKPGRGGE). Residues 127-145 (TGAAGAAGARGNDGAAGAA) are compositionally biased toward low complexity. Positions 147-160 (PPGPTGPAGPPGFP) are enriched in pro residues. Over residues 161–179 (GGPGAKGDAGAQGGRGPEG) the composition is skewed to gly residues. Composition is skewed to low complexity over residues 180–223 (PAGA…AGAP), 232–270 (SGPQGAAGAPGPKGNTGEVGAPGAKGEAGAKGEAGAPGV), and 288–297 (EPGAAGARGA). Positions 299-311 (GERGGPGGRGFPG) are enriched in gly residues. Low complexity-rich tracts occupy residues 385–400 (VGARGQPGVMGFPGPK), 477–489 (LPGEAGATGPAGA), 498–544 (ERGA…QGMP), and 577–592 (RGLTGPLGLPGPAGAT). The segment covering 602-611 (GPVGPGGARG) has biased composition (gly residues). Composition is skewed to low complexity over residues 625–661 (AGFAGPPGADGQPGAKGEAGDNGAKGDAGPPGAAGPT) and 675–697 (PKGARGAAGPPGATGFPGAAGRV). A compositionally biased stretch (pro residues) spans 699 to 712 (PPGPSGNPGPPGPA). Low complexity predominate over residues 804–822 (PGLAGAPGEPGREGSPGNE). A compositionally biased stretch (pro residues) spans 848–858 (APGPPGAPGPV). The segment covering 872-893 (PAGPAGSAGPAGPRGPAGALGL) has biased composition (low complexity). Residues 894–908 (RGDKGESGEAGERGM) are compositionally biased toward basic and acidic residues. Over residues 924-960 (AGSSGEQGPAGAAGPAGPRGPAGSAGSPGKDGMSGLP) the composition is skewed to low complexity. Over residues 976 to 988 (AGPPGPPGPPGAP) the composition is skewed to pro residues. The Fibrillar collagen NC1 domain maps to 1062 to 1095 (TGTWGKLPLLDLAPMDVGAPDQEFGLEVGPVCFL).

It belongs to the fibrillar collagen family.

The protein localises to the secreted. The protein resides in the extracellular space. It is found in the extracellular matrix. The protein is Collagen, type I, alpha 1a of Epinephelus caninus (Dogtooth grouper).